Here is a 330-residue protein sequence, read N- to C-terminus: Phosphate acyltransferase (330 aa).

This sequence belongs to the PlsX family. As to quaternary structure, homodimer. Probably interacts with PlsY.

Its subcellular location is the cytoplasm. The enzyme catalyses a fatty acyl-[ACP] + phosphate = an acyl phosphate + holo-[ACP]. It participates in lipid metabolism; phospholipid metabolism. Catalyzes the reversible formation of acyl-phosphate (acyl-PO(4)) from acyl-[acyl-carrier-protein] (acyl-ACP). This enzyme utilizes acyl-ACP as fatty acyl donor, but not acyl-CoA. In Teredinibacter turnerae (strain ATCC 39867 / T7901), this protein is Phosphate acyltransferase.